The following is a 223-amino-acid chain: Large ribosomal subunit protein bL21 (223 aa).

This sequence belongs to the bacterial ribosomal protein bL21 family. In terms of assembly, part of the 50S ribosomal subunit. Contacts protein L20.

Its function is as follows. This protein binds to 23S rRNA in the presence of protein L20. In Mesorhizobium japonicum (strain LMG 29417 / CECT 9101 / MAFF 303099) (Mesorhizobium loti (strain MAFF 303099)), this protein is Large ribosomal subunit protein bL21.